The primary structure comprises 383 residues: Caspase a (383 aa).

Residues 1 to 142 (MAKSIKDHLQ…ETYEIKDKSV (142 aa)) constitute a propeptide that is removed on maturation. The Pyrin domain occupies 8–81 (HLQDALSNIG…RGIKCNAVAE (74 aa)). A disordered region spans residues 87 to 106 (TGQGGVSQPEPPVPEPIPKD). Active-site residues include His-220 and Cys-270. The propeptide occupies 275 to 296 (HGRVWASDGEPDEPIEIEDDDF).

This sequence belongs to the peptidase C14A family. In terms of assembly, heterotetramer that consists of two anti-parallel arranged heterodimers, each one formed by a 20 kDa (p20) and a 10 kDa (p10) subunit. Interacts (via pyrin domain) with pycard (via pyrin domain). Interacts with caspb. Component of NLRP1 inflammasomes. Inflammasomes are supramolecular complexes that assemble in the cytosol in response to pathogens and other damage-associated signals and play critical roles in innate immunity and inflammation. The NLRP1 inflammasome is composed of the signal sensor nlrp1, and the adapter pycard (asc), which recruit effector pro-inflammatory caspases caspa and/or caspb. The interaction between nlrp1 and pycard is required for the sequential recruitment of caspa and then caspb. Caspa is preferentially recruited first and this causes the cleavage of pro-il1b into the midformed il1b. This is followed by the recruitment of caspb, which is activated and cleaves the midformed il1b resulting in il1b maturation. Interacts with caiap. Post-translationally, the two subunits are derived from the precursor sequence by an autocatalytic mechanism.

It is found in the inflammasome. The protein resides in the cytoplasm. The enzyme catalyses Strict requirement for an Asp residue at position P1 and has a preferred cleavage sequence of Tyr-Val-Ala-Asp-|-.. Functionally, thiol protease which cleaves IL-1 beta (il1b), releasing the mature cytokine which is involved in a variety of inflammatory processes, and mediates apoptosis. Component of the NLRP1 inflammasome, which plays a crucial role in innate immunity and inflammation. In response to pathogens and other damage-associated signals, recruited to the NLRP1 inflammasome in its precursor form. Its subsequent activation causes the cleavage of pro-il1b into the midformed il1b, which then evetually leads to il1b maturation and secretion in the extracellular milieu. Required for the development of the cartilaginous pharyngeal skeleton. The protein is Caspase a of Danio rerio (Zebrafish).